The chain runs to 1694 residues: Homeobox-DDT domain protein RLT2 (1694 aa).

The disordered stretch occupies residues 1–24; that stretch reads MEGGSEKTTPEGCGGESKSKRKMK. Positions 17 to 76 form a DNA-binding region, homeobox; the sequence is SKSKRKMKTAAQLEVLENTYSAEPYPSEAIRADLSVKLNLSDRQLQMWFCHRRLKERKST. Residues 514–573 enclose the DDT domain; the sequence is DENVANLLMVWRFLITFADVLGLWPFTLDEFAQAFHDYDPRLMGEIHIVLLKTIIKDIEG. The region spanning 696 to 765 is the HTH HARE-type domain; that stretch reads GTVKFAAFHV…APSTYCVRAS (70 aa). Over residues 795-816 the composition is skewed to acidic residues; the sequence is EDVDDAERDEDSESDVGEDPEV. Disordered stretches follow at residues 795-822, 1450-1541, 1555-1639, and 1655-1674; these read EDVD…NLKK, KQEE…ICNE, AKTS…MNMK, and EDSY…AATR. Ser806 and Ser808 each carry phosphoserine. Over residues 1459–1470 the composition is skewed to gly residues; the sequence is GLGGVSSSGRGG. 2 stretches are compositionally biased toward basic residues: residues 1471 to 1485 and 1515 to 1531; these read RPPR…RGNG and GGRK…RKRP. Acidic residues-rich tracts occupy residues 1561–1578, 1589–1605, and 1624–1635; these read DNDD…DDGE, EDYD…DFDG, and DEYEEEEEEEED.

Interacts with CHR11. Interacts (via the DDT domain) with CHR11 (via C-terminus). In terms of tissue distribution, highly expressed in growing tissues such as inflorescence and flower meristems, young leaves and floral organs. Expressed in roots, rosette and cauline leaves, stems, flowers, inflorescences and siliques.

The protein localises to the nucleus. Transcriptional regulator required for the maintenance of the plant vegetative phase. In association with CHR11 or CHR17 may prevent the early activation of the vegetative-to-reproductive transition by regulating key genes that contribute to flower timing, such as FT, SEP1, SEP3, AGL8/FUL, SOC1 and FLC. Involved in the transcriptional regulation of seed-specific gene expression. The protein is Homeobox-DDT domain protein RLT2 of Arabidopsis thaliana (Mouse-ear cress).